The chain runs to 207 residues: N-(5'-phosphoribosyl)anthranilate isomerase (207 aa).

Belongs to the TrpF family.

It catalyses the reaction N-(5-phospho-beta-D-ribosyl)anthranilate = 1-(2-carboxyphenylamino)-1-deoxy-D-ribulose 5-phosphate. It participates in amino-acid biosynthesis; L-tryptophan biosynthesis; L-tryptophan from chorismate: step 3/5. The polypeptide is N-(5'-phosphoribosyl)anthranilate isomerase (Legionella pneumophila subsp. pneumophila (strain Philadelphia 1 / ATCC 33152 / DSM 7513)).